We begin with the raw amino-acid sequence, 505 residues long: Deoxyguanosinetriphosphate triphosphohydrolase (505 aa).

The region spanning 66 to 273 (RLTHSMEVQQ…MEAADDISYC (208 aa)) is the HD domain.

The protein belongs to the dGTPase family. Type 1 subfamily. Homotetramer. Requires Mg(2+) as cofactor.

It carries out the reaction dGTP + H2O = 2'-deoxyguanosine + triphosphate + H(+). Its function is as follows. dGTPase preferentially hydrolyzes dGTP over the other canonical NTPs. In Escherichia coli O127:H6 (strain E2348/69 / EPEC), this protein is Deoxyguanosinetriphosphate triphosphohydrolase.